Consider the following 90-residue polypeptide: Probable oxaloacetate decarboxylase gamma chain 2 (90 aa).

A helical transmembrane segment spans residues 10–32 (GINLLTLGMGFVFIFLIFLVYAT).

This sequence belongs to the OadG family. As to quaternary structure, heterotrimer of an alpha, a beta and a gamma subunit. Requires Na(+) as cofactor.

The protein resides in the cell membrane. It carries out the reaction oxaloacetate + 2 Na(+)(in) + H(+) = pyruvate + 2 Na(+)(out) + CO2. In terms of biological role, catalyzes the decarboxylation of oxaloacetate coupled to Na(+) translocation. In Vibrio cholerae serotype O1 (strain ATCC 39315 / El Tor Inaba N16961), this protein is Probable oxaloacetate decarboxylase gamma chain 2 (oadG2).